We begin with the raw amino-acid sequence, 152 residues long: UPF0756 membrane protein PEPE_1090 (152 aa).

4 consecutive transmembrane segments (helical) span residues 4 to 24 (WLFL…SLII), 52 to 72 (WGVT…KIGF), 85 to 105 (WIAV…VGFL), and 115 to 135 (LVMG…GPII).

It belongs to the UPF0756 family.

It localises to the cell membrane. The protein is UPF0756 membrane protein PEPE_1090 of Pediococcus pentosaceus (strain ATCC 25745 / CCUG 21536 / LMG 10740 / 183-1w).